We begin with the raw amino-acid sequence, 213 residues long: Holliday junction branch migration complex subunit RuvA (213 aa).

The domain I stretch occupies residues 1–63 (MISFLRGTVA…EDSMTLFGFA (63 aa)). The domain II stretch occupies residues 64–140 (DDDEREVFEV…LVPHGTAPAA (77 aa)). Residues 140 to 144 (AATTA) form a flexible linker region. A domain III region spans residues 145–213 (AEASWKPQVV…RAGNRVGSRG (69 aa)).

It belongs to the RuvA family. As to quaternary structure, homotetramer. Forms an RuvA(8)-RuvB(12)-Holliday junction (HJ) complex. HJ DNA is sandwiched between 2 RuvA tetramers; dsDNA enters through RuvA and exits via RuvB. An RuvB hexamer assembles on each DNA strand where it exits the tetramer. Each RuvB hexamer is contacted by two RuvA subunits (via domain III) on 2 adjacent RuvB subunits; this complex drives branch migration. In the full resolvosome a probable DNA-RuvA(4)-RuvB(12)-RuvC(2) complex forms which resolves the HJ.

The protein localises to the cytoplasm. Functionally, the RuvA-RuvB-RuvC complex processes Holliday junction (HJ) DNA during genetic recombination and DNA repair, while the RuvA-RuvB complex plays an important role in the rescue of blocked DNA replication forks via replication fork reversal (RFR). RuvA specifically binds to HJ cruciform DNA, conferring on it an open structure. The RuvB hexamer acts as an ATP-dependent pump, pulling dsDNA into and through the RuvAB complex. HJ branch migration allows RuvC to scan DNA until it finds its consensus sequence, where it cleaves and resolves the cruciform DNA. This chain is Holliday junction branch migration complex subunit RuvA, found in Pseudarthrobacter chlorophenolicus (strain ATCC 700700 / DSM 12829 / CIP 107037 / JCM 12360 / KCTC 9906 / NCIMB 13794 / A6) (Arthrobacter chlorophenolicus).